Here is a 338-residue protein sequence, read N- to C-terminus: Holliday junction branch migration complex subunit RuvB (338 aa).

The segment at 1-180 (MERLLDNKFS…FGIIERLDYY (180 aa)) is large ATPase domain (RuvB-L). Leu19, Arg20, Gly61, Lys64, Thr65, Thr66, Arg170, Tyr180, and Arg217 together coordinate ATP. Thr65 is a binding site for Mg(2+). The small ATPAse domain (RuvB-S) stretch occupies residues 181-251 (TVEELSQIVM…VAKSGLEMFE (71 aa)). Residues 254-338 (EYGLDLVDRN…FKLKESGDNR (85 aa)) form a head domain (RuvB-H) region. Lys309 and Arg314 together coordinate DNA.

This sequence belongs to the RuvB family. In terms of assembly, homohexamer. Forms an RuvA(8)-RuvB(12)-Holliday junction (HJ) complex. HJ DNA is sandwiched between 2 RuvA tetramers; dsDNA enters through RuvA and exits via RuvB. An RuvB hexamer assembles on each DNA strand where it exits the tetramer. Each RuvB hexamer is contacted by two RuvA subunits (via domain III) on 2 adjacent RuvB subunits; this complex drives branch migration. In the full resolvosome a probable DNA-RuvA(4)-RuvB(12)-RuvC(2) complex forms which resolves the HJ.

It is found in the cytoplasm. It catalyses the reaction ATP + H2O = ADP + phosphate + H(+). In terms of biological role, the RuvA-RuvB-RuvC complex processes Holliday junction (HJ) DNA during genetic recombination and DNA repair, while the RuvA-RuvB complex plays an important role in the rescue of blocked DNA replication forks via replication fork reversal (RFR). RuvA specifically binds to HJ cruciform DNA, conferring on it an open structure. The RuvB hexamer acts as an ATP-dependent pump, pulling dsDNA into and through the RuvAB complex. RuvB forms 2 homohexamers on either side of HJ DNA bound by 1 or 2 RuvA tetramers; 4 subunits per hexamer contact DNA at a time. Coordinated motions by a converter formed by DNA-disengaged RuvB subunits stimulates ATP hydrolysis and nucleotide exchange. Immobilization of the converter enables RuvB to convert the ATP-contained energy into a lever motion, pulling 2 nucleotides of DNA out of the RuvA tetramer per ATP hydrolyzed, thus driving DNA branch migration. The RuvB motors rotate together with the DNA substrate, which together with the progressing nucleotide cycle form the mechanistic basis for DNA recombination by continuous HJ branch migration. Branch migration allows RuvC to scan DNA until it finds its consensus sequence, where it cleaves and resolves cruciform DNA. The protein is Holliday junction branch migration complex subunit RuvB of Caldicellulosiruptor bescii (strain ATCC BAA-1888 / DSM 6725 / KCTC 15123 / Z-1320) (Anaerocellum thermophilum).